The following is an 822-amino-acid chain: MPTVISASVAPRTGAEPRSPGPIAQAAQGKGTEAGGGNPSGIYSAIISRNFPIIGVKEKTFEQLHRKCLEKKVLFVDPEFPPDETSLFYSQKFPIQFIWKRPPEICENPRFIIGGANRTDICQGDLGDCWFLAAIACLTLNERLLFRVIPHDQSFTENYAGIFHFQFWRYGDWVDVVIDDCLPTYNNQLVFTKSNHRNEFWSALLEKAYAKLHGSYEALKAGNTTEGMEDFTGELTEFFEIKDAPRDMYKIMKKAIERGSLMGCSIDDGTNMTYGTSPSGLKMGELIERMVRNMDNSRLRDSDLIPEGCSDDRPTRTIVPVQYETRMACGLVKGHAYSVTGLEEALYKGEKVKLVRLRNPWGQVEWNGSWSDSWKDWSYVDKDEKARLQHQVTEDGEFWMSYDDFIYHFTKLEICNLTADALESDKLQTWTVSVNEGRWVRGCSAGGCRNFPDTFWTNPQYRLKLLEEDDDPDDSEVICSFLVALMQKNRRKDRKLGANLFTIGFAIYEVPKEMHGNKQHLQKDFFLYNASKARSRTYINMREVSERFRLPPSEYVIVPSTYEPHQEGEFILRVFSEKRNLSEEVENTISVDRPVKKKKPKPIIFGSDRANSNKELGVDQESEEGKDNTSPDKQAKSPQLKPGNIDQESKEQRQFRNIFRQIAGDDMEICADELKNVLNRVVNKHKDLKTQGFTLESCRSMIALMDTDGSGRLNLQEFHHLWKKIKTWQKIFKHYDTDQSGTINSYEMRNAVNDAGFHLNNQLYDIITMRYADKYMNIDFDSFICCFVRLEGMFRAFNAFDKDGDGIIKLNVLEWLQLTMYA.

Positions 1–36 are disordered; it reads MPTVISASVAPRTGAEPRSPGPIAQAAQGKGTEAGG. One can recognise a Calpain catalytic domain in the interval 74 to 418; the sequence is LFVDPEFPPD…FTKLEICNLT (345 aa). Catalysis depends on residues Cys-129, His-335, and Asn-359. The tract at residues 419–587 is domain III; that stretch reads ADALESDKLQ…KRNLSEEVEN (169 aa). The segment at 588–649 is linker; that stretch reads TISVDRPVKK…LKPGNIDQES (62 aa). Positions 600-651 are disordered; sequence PKPIIFGSDRANSNKELGVDQESEEGKDNTSPDKQAKSPQLKPGNIDQESKE. The segment covering 623 to 635 has biased composition (basic and acidic residues); sequence EEGKDNTSPDKQA. 4 EF-hand domains span residues 650–684, 693–726, 723–758, and 788–822; these read KEQR…VVNK, FTLE…KKIK, KKIK…AGFH, and VRLE…TMYA. The interval 650-822 is domain IV; that stretch reads KEQRQFRNIF…LEWLQLTMYA (173 aa). Residues Ala-663, Asp-666, Glu-668, Glu-673, Asp-706, Asp-708, Ser-710, Arg-712, Glu-717, Asp-736, Asp-738, Ser-740, Thr-742, Glu-747, Asp-801, Asp-803, Asp-805, and Ile-807 each contribute to the Ca(2+) site.

It belongs to the peptidase C2 family. In terms of assembly, homodimer; via EF-hand domain 4. Interacts with TTN/titin. Interacts with CMYA5; this interaction, which results in CMYA5 proteolysis, may protect CAPN3 from autolysis. Interacts with SIMC1. Interacts with UTP25; the interaction is required for CAPN3 translocation to the nucleolus. Skeletal muscle.

It is found in the cytoplasm. It localises to the nucleus. The protein localises to the nucleolus. It catalyses the reaction Broad endopeptidase activity.. Activated by micromolar concentrations of calcium and inhibited by calpastatin. In terms of biological role, calcium-regulated non-lysosomal thiol-protease. Proteolytically cleaves CTBP1. Mediates, with UTP25, the proteasome-independent degradation of p53/TP53. This is Calpain-3 (CAPN3) from Ovis aries (Sheep).